The following is a 191-amino-acid chain: UPF0149 protein VV1_1551 (191 aa).

It belongs to the UPF0149 family.

The protein is UPF0149 protein VV1_1551 of Vibrio vulnificus (strain CMCP6).